A 199-amino-acid chain; its full sequence is RNA pyrophosphohydrolase (199 aa).

In terms of domain architecture, Nudix hydrolase spans 6-154 (GYRPNVGIVL…KREVYELALS (149 aa)). A Nudix box motif is present at residues 38 to 59 (GGIQHGESPEQAMYRELHEEVG).

Belongs to the Nudix hydrolase family. RppH subfamily. Requires a divalent metal cation as cofactor.

Its function is as follows. Accelerates the degradation of transcripts by removing pyrophosphate from the 5'-end of triphosphorylated RNA, leading to a more labile monophosphorylated state that can stimulate subsequent ribonuclease cleavage. The chain is RNA pyrophosphohydrolase from Polynucleobacter asymbioticus (strain DSM 18221 / CIP 109841 / QLW-P1DMWA-1) (Polynucleobacter necessarius subsp. asymbioticus).